The primary structure comprises 64 residues: Large ribosomal subunit protein bL35 (64 aa).

This sequence belongs to the bacterial ribosomal protein bL35 family.

This chain is Large ribosomal subunit protein bL35, found in Coxiella burnetii (strain RSA 331 / Henzerling II).